Consider the following 357-residue polypeptide: Protein NDRG2 (357 aa).

Residues 1-14 are compositionally biased toward basic and acidic residues; that stretch reads MAELREVQITEEKP. The segment at 1–26 is disordered; it reads MAELREVQITEEKPLLPGQTPEVAKT. An N-acetylalanine modification is found at alanine 2. Threonine 20 carries the phosphothreonine modification. Residues serine 312 and serine 314 each carry the phosphoserine modification. At threonine 316 the chain carries Phosphothreonine. Position 318 is a phosphoserine (serine 318). Threonine 320 is subject to Phosphothreonine. The segment at 320–357 is disordered; it reads TSAASIDGNRSRSRTLSQSSESGTLSSGPPGHTMEVSC. Phosphoserine occurs at positions 321, 324, and 330. Residues 333-347 are compositionally biased toward low complexity; the sequence is RTLSQSSESGTLSSG. The residue at position 334 (threonine 334) is a Phosphothreonine. Serine 336, serine 338, serine 339, and serine 341 each carry phosphoserine. Position 343 is a phosphothreonine (threonine 343). At serine 356 the chain carries Phosphoserine.

The protein belongs to the NDRG family. As to quaternary structure, interacts with CTNNB1.

It is found in the cytoplasm. The protein localises to the perinuclear region. The protein resides in the cell projection. It localises to the growth cone. In terms of biological role, contributes to the regulation of the Wnt signaling pathway. Down-regulates CTNNB1-mediated transcriptional activation of target genes, such as CCND1, and may thereby act as tumor suppressor. May be involved in dendritic cell and neuron differentiation. The protein is Protein NDRG2 (NDRG2) of Bos taurus (Bovine).